Reading from the N-terminus, the 108-residue chain is UPF0102 protein Shewana3_3881 (108 aa).

Belongs to the UPF0102 family.

The protein is UPF0102 protein Shewana3_3881 of Shewanella sp. (strain ANA-3).